A 391-amino-acid polypeptide reads, in one-letter code: Phosphoglycerate kinase (391 aa).

Residues 21–23 (DLN), R36, 59–62 (HLGR), R113, and R146 contribute to the substrate site. ATP is bound by residues K197, E319, and 345 to 348 (GGDT).

It belongs to the phosphoglycerate kinase family. As to quaternary structure, monomer.

It localises to the cytoplasm. It catalyses the reaction (2R)-3-phosphoglycerate + ATP = (2R)-3-phospho-glyceroyl phosphate + ADP. Its pathway is carbohydrate degradation; glycolysis; pyruvate from D-glyceraldehyde 3-phosphate: step 2/5. This chain is Phosphoglycerate kinase, found in Shewanella putrefaciens (strain CN-32 / ATCC BAA-453).